Here is a 419-residue protein sequence, read N- to C-terminus: Histidine--tRNA ligase (419 aa).

It belongs to the class-II aminoacyl-tRNA synthetase family. Homodimer.

Its subcellular location is the cytoplasm. The catalysed reaction is tRNA(His) + L-histidine + ATP = L-histidyl-tRNA(His) + AMP + diphosphate + H(+). The protein is Histidine--tRNA ligase of Syntrophotalea carbinolica (strain DSM 2380 / NBRC 103641 / GraBd1) (Pelobacter carbinolicus).